The primary structure comprises 807 residues: Dynein axonemal intermediate chain 4 (807 aa).

Polar residues-rich tracts occupy residues 1 to 11 (MHSSPTSTRKQ) and 22 to 31 (PRKSISFINP). 2 disordered regions span residues 1–44 (MHSS…AASN) and 300–320 (YSSK…DSES). The segment covering 32-43 (SKSSAGKGYAAS) has biased composition (low complexity). Over residues 308-317 (AKDRDPKIQD) the composition is skewed to basic and acidic residues. WD repeat units follow at residues 493–533 (QSSY…NIPV), 542–590 (KHLG…DCHD), 617–657 (SRQA…QYLE), 661–701 (GHKG…PFLS), 704–743 (PTTY…LDPL), and 749–788 (NPGI…TASD).

Part of the multisubunit axonemal dynein complex formed at least of two heavy chains and a number of intermediate and light chains. Associated with axonemal dynein subunits such as, DNAH2, DNAI3, and DYNLT1. Interacts with DYNLT1. In terms of tissue distribution, highly expressed in tissues containing motile cilia, including the trachea, lung, oviduct, and testis.

The protein resides in the cytoplasm. The protein localises to the cytoskeleton. It is found in the flagellum axoneme. Its subcellular location is the cilium axoneme. It localises to the dynein axonemal particle. Its function is as follows. Plays a critical role in the assembly of axonemal dynein complex, thereby playing a role in ciliary motility. This chain is Dynein axonemal intermediate chain 4 (Dnai4), found in Mus musculus (Mouse).